The primary structure comprises 479 residues: MVGRSRRRGAAKWAAVRAKAGPTLTDENGDDLGLPPSPGDTSYYQDQVDDFHEARSRAALAKGWNEVQSGDEEDGEEEEEEVLALDMDDEDDEDGGNAGEEEEEENADDDGGSSVQSEAEASVDPSLSWGQRKKLYYDTDYGSKSRGRQSQQEAEEEEREEEEEAQIIQRRLAQALQEDDFGVAWVEAFAKPVPQVDEAETRVVKDLAKVSVKEKLKMLRKESPELLELIEDLKVKLTEVKDELEPLLELVEQGIIPPGKGSQYLRTKYNLYLNYCSNISFYLILKARRVPAHGHPVIERLVTYRNLINKLSVVDQKLSSEIRHLLTLKDDAVKKELIPKAKSTKPKPKSVSKTSAAACAVTDLSDDSDFDEKAKLKYYKEIEDRQKLKRKKEENSTEEQALEDQNAKRAITYQIAKNRGLTPRRKKIDRNPRVKHREKFRRAKIRRRGQVREVRKEEQRYSGELSGIRAGVKKSIKLK.

The span at M1–A10 shows a compositional bias: basic residues. 2 disordered regions span residues M1–Q45 and K62–Q166. At R8 the chain carries Omega-N-methylarginine. Residues A11–G21 are compositionally biased toward low complexity. The residue at position 37 (S37) is a Phosphoserine. Positions S69–G111 are enriched in acidic residues. K144 is subject to N6-acetyllysine; alternate. A Glycyl lysine isopeptide (Lys-Gly) (interchain with G-Cter in SUMO2); alternate cross-link involves residue K144. Position 150 is a phosphoserine (S150). Residues E153–A165 show a composition bias toward acidic residues. The residue at position 362 (T362) is a Phosphothreonine. Phosphoserine occurs at positions 365 and 368. Residue R385 is modified to Citrulline. The tract at residues R419–S466 is disordered. The segment covering T422–G449 has biased composition (basic residues). Residues Q450–Y461 show a composition bias toward basic and acidic residues.

The protein belongs to the SAS10 family. Part of the small subunit (SSU) processome, composed of more than 70 proteins and the RNA chaperone small nucleolar RNA (snoRNA) U3. Post-translationally, citrullinated by PADI4.

It localises to the nucleus. The protein localises to the nucleolus. Functionally, essential for gene silencing: has a role in the structure of silenced chromatin. Plays a role in the developing brain. Part of the small subunit (SSU) processome, first precursor of the small eukaryotic ribosomal subunit. During the assembly of the SSU processome in the nucleolus, many ribosome biogenesis factors, an RNA chaperone and ribosomal proteins associate with the nascent pre-rRNA and work in concert to generate RNA folding, modifications, rearrangements and cleavage as well as targeted degradation of pre-ribosomal RNA by the RNA exosome. In Homo sapiens (Human), this protein is Something about silencing protein 10.